The primary structure comprises 694 residues: Scarecrow-like protein 33 (694 aa).

Residues 289-313 are disordered; sequence PAKASTFSKSPKGEKPEASGNSYTK. Positions 309–692 constitute a GRAS domain; sequence NSYTKETPDL…RIVYGSSIWV (384 aa). The tract at residues 316-376 is leucine repeat I (LRI); the sequence is PDLRTMLVSC…EARLAGIGTQ (61 aa). A VHIID region spans residues 395–462; the sequence is YQTYISVCPF…GSSCKLRITG (68 aa). The VHIID motif lies at 428 to 432; that stretch reads IHIID. The segment at 478 to 510 is leucine repeat II (LRII); that stretch reads ETGRRLAKYCQKFNIPFEYNAIAQKWESIKLED. The PFYRE stretch occupies residues 519-613; the sequence is VAVNSLFRFR…KEFYGREIMN (95 aa). Residues 616-692 are SAW; it reads ACEGTERVER…RIVYGSSIWV (77 aa).

The protein belongs to the GRAS family. Interacts with SNRNP35.

Its subcellular location is the nucleus. Its function is as follows. Probable transcription factor involved in plant development. The protein is Scarecrow-like protein 33 (SCL33) of Arabidopsis thaliana (Mouse-ear cress).